A 274-amino-acid chain; its full sequence is NAD(P)H dehydrogenase [quinone] 1 (274 aa).

Ala2 carries the N-acetylalanine modification. FAD is bound by residues His12, 18-19, and Gln67; that span reads FN. At Ser82 the chain carries Phosphoserine. 104 to 107 serves as a coordination point for FAD; the sequence is LYWF. 126–128 lines the substrate pocket; that stretch reads AYT. FAD is bound by residues 148-151, Tyr156, and Arg201; that span reads TTGG. The segment at 225–274 is important for apoenzyme conformational stability; that stretch reads PSSLFDLNFQAGFLLKKEVQEEQKKNKFGLSVGHHLGKSIPADNQIKARK. Lys251 is covalently cross-linked (Glycyl lysine isopeptide (Lys-Gly) (interchain with G-Cter in SUMO2)).

The protein belongs to the NAD(P)H dehydrogenase (quinone) family. As to quaternary structure, homodimer. Interacts with PDLIM4 isoform 2; this interaction stabilizes PDLIM4 isoform 2 in response to oxidative stress and protects it from ubiquitin-independent degradation by the core 20S proteasome. Interacts with TP73 (via SAM domain); this interaction is NADH-dependent, stabilizes TP73 in response to oxidative stress and protects it from ubiquitin-independent degradation by the 20S proteasome. Interacts with TP53; this interaction is NADH-dependent, stabilizes TP53 in response to oxidative stress and protects it from ubiquitin-independent degradation by the 20S proteasome. The cofactor is FAD.

The protein resides in the cytoplasm. It localises to the cytosol. It carries out the reaction a quinone + NADH + H(+) = a quinol + NAD(+). The catalysed reaction is a quinone + NADPH + H(+) = a quinol + NADP(+). It catalyses the reaction ubiquinone-10 + NADH + H(+) = ubiquinol-10 + NAD(+). The enzyme catalyses menadione + NADH + H(+) = menadiol + NAD(+). Flavin-containing quinone reductase that catalyzes two-electron reduction of quinones to hydroquinones using either NADH or NADPH as electron donors. In a ping-pong kinetic mechanism, the electrons are sequentially transferred from NAD(P)H to flavin cofactor and then from reduced flavin to the quinone, bypassing the formation of semiquinone and reactive oxygen species. Regulates cellular redox state primarily through quinone detoxification. Reduces components of plasma membrane redox system such as coenzyme Q and vitamin quinones, producing antioxidant hydroquinone forms. In the process may function as superoxide scavenger to prevent hydroquinone oxidation and facilitate excretion. Alternatively, can activate quinones and their derivatives by generating redox reactive hydroquinones with DNA cross-linking antitumor potential. Acts as a gatekeeper of the core 20S proteasome known to degrade proteins with unstructured regions. Upon oxidative stress, interacts with tumor suppressors TP53 and TP73 in a NADH-dependent way and inhibits their ubiquitin-independent degradation by the 20S proteasome. The protein is NAD(P)H dehydrogenase [quinone] 1 (Nqo1) of Rattus norvegicus (Rat).